The following is a 270-amino-acid chain: Acetylglutamate kinase (270 aa).

Substrate is bound by residues Gly-41–Gly-42, Arg-63, and Asn-166.

The protein belongs to the acetylglutamate kinase family. ArgB subfamily.

Its subcellular location is the cytoplasm. It catalyses the reaction N-acetyl-L-glutamate + ATP = N-acetyl-L-glutamyl 5-phosphate + ADP. It functions in the pathway amino-acid biosynthesis; L-arginine biosynthesis; N(2)-acetyl-L-ornithine from L-glutamate: step 2/4. Functionally, catalyzes the ATP-dependent phosphorylation of N-acetyl-L-glutamate. This is Acetylglutamate kinase from Anaeromyxobacter dehalogenans (strain 2CP-C).